A 76-amino-acid chain; its full sequence is U-scoloptoxin(13)-Sa1a (76 aa).

Residues 1–22 (MAYIFALIFAFVVCINTDVIQA) form the signal peptide.

It belongs to the scoloptoxin-13 family. In terms of processing, contains 4 disulfide bonds. As to expression, expressed by the venom gland.

It localises to the secreted. The sequence is that of U-scoloptoxin(13)-Sa1a from Scolopendra alternans (Florida Keys giant centipede).